A 670-amino-acid chain; its full sequence is Protein HBS1 (670 aa).

2 disordered regions span residues 60–88 (KDIQEEEADEDEDEDAAFAKARRDSESFQ) and 164–202 (KTVSKTVPTPPPKISLKEPRRGFEIPSPKVPSSPVVSGR). A compositionally biased stretch (acidic residues) spans 63-75 (QEEEADEDEDEDA). Positions 189-200 (PSPKVPSSPVVS) are enriched in low complexity. In terms of domain architecture, tr-type G spans 245-468 (KSHIHMIVIG…DVIENFKIPE (224 aa)). The G1 stretch occupies residues 254-261 (GHVDAGKS). 254-261 (GHVDAGKS) lines the GTP pocket. A G2 region spans residues 310-314 (GITMD). The interval 331-334 (DAPG) is G3. GTP contacts are provided by residues 393–396 (NKLD) and 432–434 (SGL). The G4 stretch occupies residues 393–396 (NKLD). Positions 432-434 (SGL) are G5.

It belongs to the TRAFAC class translation factor GTPase superfamily. Classic translation factor GTPase family. Component of the Pelota-HBS1L complex, also named Dom34-Hbs1 complex, composed of pelo and HBS1. As to expression, expressed in ovaries (at protein level).

Its subcellular location is the cytoplasm. The enzyme catalyses GTP + H2O = GDP + phosphate + H(+). GTPase component of the Pelota-HBS1L complex, a complex that recognizes stalled ribosomes and triggers the No-Go Decay (NGD) pathway. The Pelota-HBS1L complex recognizes ribosomes stalled at the 3' end of an mRNA and engages stalled ribosomes by destabilizing mRNA in the mRNA channel. Following ribosome-binding, the Pelota-HBS1L complex promotes recruitment of pix, which drives the disassembly of stalled ribosomes, followed by degradation of damaged mRNAs as part of the NGD pathway. Together with pelo, required for transposon silencing in the ovary and testis. Together with pelo, promotes meiosis and spermatid individualization during spermatogenesis. The chain is Protein HBS1 from Drosophila melanogaster (Fruit fly).